A 216-amino-acid chain; its full sequence is CDP-diacylglycerol--glycerol-3-phosphate 3-phosphatidyltransferase (216 aa).

4 helical membrane-spanning segments follow: residues 40 to 60 (VVSIASVLLFLFIACTDFLDG), 88 to 108 (VMLCLVADNFMPVFLFLCILY), 141 to 161 (MGAVLFSLLLKALYAFELAGA), and 176 to 196 (VVPVVLALASFFSYLKTFFPI).

It belongs to the CDP-alcohol phosphatidyltransferase class-I family.

The protein resides in the cell membrane. The catalysed reaction is a CDP-1,2-diacyl-sn-glycerol + sn-glycerol 3-phosphate = a 1,2-diacyl-sn-glycero-3-phospho-(1'-sn-glycero-3'-phosphate) + CMP + H(+). The protein operates within phospholipid metabolism; phosphatidylglycerol biosynthesis; phosphatidylglycerol from CDP-diacylglycerol: step 1/2. Functionally, this protein catalyzes the committed step to the synthesis of the acidic phospholipids. This Treponema pallidum (strain Nichols) protein is CDP-diacylglycerol--glycerol-3-phosphate 3-phosphatidyltransferase (pgsA).